Consider the following 105-residue polypeptide: Phosphoribosyl-ATP pyrophosphatase (105 aa).

Belongs to the PRA-PH family.

The protein resides in the cytoplasm. It carries out the reaction 1-(5-phospho-beta-D-ribosyl)-ATP + H2O = 1-(5-phospho-beta-D-ribosyl)-5'-AMP + diphosphate + H(+). It participates in amino-acid biosynthesis; L-histidine biosynthesis; L-histidine from 5-phospho-alpha-D-ribose 1-diphosphate: step 2/9. The polypeptide is Phosphoribosyl-ATP pyrophosphatase (Ruegeria sp. (strain TM1040) (Silicibacter sp.)).